A 267-amino-acid polypeptide reads, in one-letter code: Eukaryotic translation initiation factor 3 subunit J (267 aa).

Disordered regions lie at residues 1 to 128 and 220 to 241; these read MAPS…DIDL and KMREERAADKGNKKTKAAKTKV. Acidic residues predominate over residues 28 to 46; it reads DEEEEDVLDSWDAAEDSEV. The stretch at 44 to 96 forms a coiled coil; it reads SEVEREKAAKAAAAAAKAEAEAAAKKKSKAQRIEEHKQERKKQAEANESDEDS. Residues 74 to 88 show a composition bias toward basic and acidic residues; that stretch reads QRIEEHKQERKKQAE. Residues 90-100 are compositionally biased toward acidic residues; sequence NESDEDSDEDE. Composition is skewed to basic and acidic residues over residues 108 to 121 and 220 to 231; these read RRTEKEGDLKHAQD and KMREERAADKGN.

It belongs to the eIF-3 subunit J family. Component of the eukaryotic translation initiation factor 3 (eIF-3) complex.

It localises to the cytoplasm. Its function is as follows. Component of the eukaryotic translation initiation factor 3 (eIF-3) complex, which is involved in protein synthesis of a specialized repertoire of mRNAs and, together with other initiation factors, stimulates binding of mRNA and methionyl-tRNAi to the 40S ribosome. The eIF-3 complex specifically targets and initiates translation of a subset of mRNAs involved in cell proliferation. The protein is Eukaryotic translation initiation factor 3 subunit J (hcr1) of Neosartorya fischeri (strain ATCC 1020 / DSM 3700 / CBS 544.65 / FGSC A1164 / JCM 1740 / NRRL 181 / WB 181) (Aspergillus fischerianus).